The primary structure comprises 150 residues: D-aminoacyl-tRNA deacylase (150 aa).

The Gly-cisPro motif, important for rejection of L-amino acids signature appears at 136–137; it reads GP.

Belongs to the DTD family. Homodimer.

The protein resides in the cytoplasm. The enzyme catalyses glycyl-tRNA(Ala) + H2O = tRNA(Ala) + glycine + H(+). The catalysed reaction is a D-aminoacyl-tRNA + H2O = a tRNA + a D-alpha-amino acid + H(+). An aminoacyl-tRNA editing enzyme that deacylates mischarged D-aminoacyl-tRNAs. Also deacylates mischarged glycyl-tRNA(Ala), protecting cells against glycine mischarging by AlaRS. Acts via tRNA-based rather than protein-based catalysis; rejects L-amino acids rather than detecting D-amino acids in the active site. By recycling D-aminoacyl-tRNA to D-amino acids and free tRNA molecules, this enzyme counteracts the toxicity associated with the formation of D-aminoacyl-tRNA entities in vivo and helps enforce protein L-homochirality. The protein is D-aminoacyl-tRNA deacylase of Macrococcus caseolyticus (strain JCSC5402) (Macrococcoides caseolyticum).